The chain runs to 375 residues: Probable aminomethyltransferase (375 aa).

It belongs to the GcvT family. As to quaternary structure, the glycine cleavage system is composed of four proteins: P, T, L and H.

It carries out the reaction N(6)-[(R)-S(8)-aminomethyldihydrolipoyl]-L-lysyl-[protein] + (6S)-5,6,7,8-tetrahydrofolate = N(6)-[(R)-dihydrolipoyl]-L-lysyl-[protein] + (6R)-5,10-methylene-5,6,7,8-tetrahydrofolate + NH4(+). In terms of biological role, the glycine cleavage system catalyzes the degradation of glycine. This chain is Probable aminomethyltransferase, found in Aeropyrum pernix (strain ATCC 700893 / DSM 11879 / JCM 9820 / NBRC 100138 / K1).